The following is a 335-amino-acid chain: Fimbrial adhesin PapGIII (335 aa).

A signal peptide spans 1 to 21 (MKKWLPAFLFLSLSGCNDALA).

Belongs to the adhesin PapG family.

The protein localises to the secreted. It is found in the fimbrium. Tip adhesin component of type P pili that binds preferentially to Gal-alpha(1-4)-Gal-containing glycolipids such as globoside. This tip is common in E.coli strains that cause human cystitis, but rare in pyelonephritic isolates. The sequence is that of Fimbrial adhesin PapGIII from Escherichia coli.